Here is a 230-residue protein sequence, read N- to C-terminus: MDNQLTTELKERYGIVFHDVNLLEQAFTHSSYVNEHRYLKLSDNERLEFLGDAVLELIVSQYLYLKFPELPEGKLTKMRAAIVREDSLAKFAKECHFDNYILLGKGEEASGGRTRASLLCDLFEAFLGALYLDQKVGAAKKFIEDVIFPKIDAGAFSHEMDHKTQLQEVLQRKGDVSIEYRLIKEEGPAHDRTFFTEVYMNGELIGLGQGKSKKLAEQDAAERALKSIPQ.

Positions 6–135 (TTELKERYGI…FLGALYLDQK (130 aa)) constitute an RNase III domain. Residue E48 participates in Mg(2+) binding. Residue D52 is part of the active site. Mg(2+)-binding residues include D121 and E124. The active site involves E124. Residues 161–230 (DHKTQLQEVL…AERALKSIPQ (70 aa)) enclose the DRBM domain.

The protein belongs to the ribonuclease III family. In terms of assembly, homodimer. Mg(2+) is required as a cofactor.

Its subcellular location is the cytoplasm. It carries out the reaction Endonucleolytic cleavage to 5'-phosphomonoester.. Digests double-stranded RNA. Involved in the processing of primary rRNA transcript to yield the immediate precursors to the large and small rRNAs (23S and 16S). Processes some mRNAs, and tRNAs when they are encoded in the rRNA operon. Processes pre-crRNA and tracrRNA of type II CRISPR loci if present in the organism. The protein is Ribonuclease 3 of Enterococcus faecalis (strain ATCC 700802 / V583).